The primary structure comprises 163 residues: Keratin-associated protein 11-1 (163 aa).

Tandem repeats lie at residues 111-120 (CQPLGGISSV), 121-130 (CQPVGGISTV), 131-140 (CQPVGGVSTV), and 141-150 (CQPACGVSRT). The segment at 111-150 (CQPLGGISSVCQPVGGISTVCQPVGGVSTVCQPACGVSRT) is 4 X 10 AA approximate repeats.

This sequence belongs to the PMG family. In terms of tissue distribution, expressed in the upper matrix and in the entire hair cortex.

Functionally, in the hair cortex, hair keratin intermediate filaments are embedded in an interfilamentous matrix, consisting of hair keratin-associated proteins (KRTAP), which are essential for the formation of a rigid and resistant hair shaft through their extensive disulfide bond cross-linking with abundant cysteine residues of hair keratins. The matrix proteins include the high-sulfur and high-glycine-tyrosine keratins. In Homo sapiens (Human), this protein is Keratin-associated protein 11-1 (KRTAP11-1).